The following is a 309-amino-acid chain: Glutaminase (309 aa).

Positions 64, 114, 160, 167, 191, 243, and 261 each coordinate substrate.

This sequence belongs to the glutaminase family. Homotetramer.

It carries out the reaction L-glutamine + H2O = L-glutamate + NH4(+). The sequence is that of Glutaminase from Rhizobium johnstonii (strain DSM 114642 / LMG 32736 / 3841) (Rhizobium leguminosarum bv. viciae).